Here is a 208-residue protein sequence, read N- to C-terminus: Cytidylate kinase (208 aa).

9 to 17 (GPSASGKSS) provides a ligand contact to ATP.

Belongs to the cytidylate kinase family. Type 1 subfamily.

The protein resides in the cytoplasm. The enzyme catalyses CMP + ATP = CDP + ADP. It catalyses the reaction dCMP + ATP = dCDP + ADP. The sequence is that of Cytidylate kinase from Thermus thermophilus (strain ATCC BAA-163 / DSM 7039 / HB27).